Here is a 269-residue protein sequence, read N- to C-terminus: Hydroxyethylthiazole kinase (269 aa).

Met-42 lines the substrate pocket. Residues Arg-118 and Ser-164 each contribute to the ATP site. Gly-191 is a binding site for substrate.

This sequence belongs to the Thz kinase family. The cofactor is Mg(2+).

It carries out the reaction 5-(2-hydroxyethyl)-4-methylthiazole + ATP = 4-methyl-5-(2-phosphooxyethyl)-thiazole + ADP + H(+). Its pathway is cofactor biosynthesis; thiamine diphosphate biosynthesis; 4-methyl-5-(2-phosphoethyl)-thiazole from 5-(2-hydroxyethyl)-4-methylthiazole: step 1/1. Functionally, catalyzes the phosphorylation of the hydroxyl group of 4-methyl-5-beta-hydroxyethylthiazole (THZ). The sequence is that of Hydroxyethylthiazole kinase from Listeria welshimeri serovar 6b (strain ATCC 35897 / DSM 20650 / CCUG 15529 / CIP 8149 / NCTC 11857 / SLCC 5334 / V8).